The sequence spans 956 residues: uncharacterized protein (956 aa).

Positions 918–942 (NSINEAIEKLNEAADAYQAIIDQQK) form a coiled coil.

This is an uncharacterized protein from Acanthamoeba polyphaga (Amoeba).